A 691-amino-acid polypeptide reads, in one-letter code: Protein simr-1 (691 aa).

A Tudor; degenerate domain is found at Glu-139–Ile-204. Disordered regions lie at residues Thr-547–Ile-573 and Asp-588–Ser-618. Polar residues-rich tracts occupy residues Pro-549 to Ile-573 and Asp-588 to Asn-598.

The protein localises to the cytoplasm. The protein resides in the perinuclear region. In terms of biological role, acts downstream of piRNA production to promote mediator complex-dependent endogenous siRNA biogenesis from piRNA-target mRNAs in the RNA interference pathway in germ cells. Not required to identify target mRNA by the piRNA pathway. Plays a role in both spermatogenesis and oogenesis and in maintaining fertility over multiple generations, probably by directing mutator-dependent silencing to piRNA-targeted genes. The sequence is that of Protein simr-1 from Caenorhabditis elegans.